The chain runs to 407 residues: uncharacterized protein (407 aa).

Disordered regions lie at residues 1 to 62 (MTGR…NGDP) and 350 to 379 (SVTP…KPSS). Positions 17-30 (PVEKMPRFQREHGA) are enriched in basic and acidic residues.

This is an uncharacterized protein from Ictaluridae (bullhead catfishes).